Consider the following 679-residue polypeptide: Glutamine-dependent NAD(+) synthetase (679 aa).

The 265-residue stretch at 12-276 folds into the CN hydrolase domain; it reads VRVAACTHHT…VRRSVADVDT (265 aa). Glu-52 functions as the Proton acceptor; for glutaminase activity in the catalytic mechanism. Lys-121 (for glutaminase activity) is an active-site residue. Tyr-127 serves as a coordination point for L-glutamine. Cys-176 functions as the Nucleophile; for glutaminase activity in the catalytic mechanism. Positions 203 and 209 each coordinate L-glutamine. Residues 337–679 are ligase; that stretch reads QQDCYEAYNI…DQIDREVPKG (343 aa). Residue 366-373 coordinates ATP; that stretch reads GVSGGLDS. Deamido-NAD(+) is bound at residue Asn-456. Thr-480 is an ATP binding site. Deamido-NAD(+) is bound by residues Glu-485, 490 to 493, and Lys-635; that span reads WSTY. The interval 639–658 is disordered; that stretch reads LPNGPKVSHGGALSPRGDWR.

In the C-terminal section; belongs to the NAD synthetase family.

The enzyme catalyses deamido-NAD(+) + L-glutamine + ATP + H2O = L-glutamate + AMP + diphosphate + NAD(+) + H(+). It participates in cofactor biosynthesis; NAD(+) biosynthesis; NAD(+) from deamido-NAD(+) (L-Gln route): step 1/1. Catalyzes the ATP-dependent amidation of deamido-NAD to form NAD. Uses L-glutamine as a nitrogen source. This is Glutamine-dependent NAD(+) synthetase from Mycobacterium bovis (strain ATCC BAA-935 / AF2122/97).